Reading from the N-terminus, the 175-residue chain is uncharacterized protein (175 aa).

This is an uncharacterized protein from Bacillus subtilis (strain 168).